The sequence spans 85 residues: MRWRPSSWSAVRLRRGRSSGCPIVVGKMPAEPADLDRDGYPAGRGRASVEGEGGRHADRHGGPQAQELPHDQRPADQEQCGQHCR.

A disordered region spans residues 1 to 85 (MRWRPSSWSA…DQEQCGQHCR (85 aa)). The span at 47–61 (ASVEGEGGRHADRHG) shows a compositional bias: basic and acidic residues.

This is an uncharacterized protein from Streptomyces lividans.